The sequence spans 96 residues: Cytochrome c oxidase assembly factor 3 homolog, mitochondrial (96 aa).

Residues 1–50 are Mitochondrial matrix-facing; sequence MSSQGEPKPEAQFAKRIDPTKEALTKEQLQFIRQVEMAQWKKKTDKLRGR. Residues 51–73 traverse the membrane as a helical segment; sequence NVATGLAIGAVVLGIYGYTFYSV. Over 74-96 the chain is Mitochondrial intermembrane; the sequence is SQEKIMDEIDEEAKVRVPKTGAN.

It belongs to the COA3 family. As to quaternary structure, core component of the MITRAC (mitochondrial translation regulation assembly intermediate of cytochrome c oxidase complex) complex.

It localises to the mitochondrion inner membrane. In terms of biological role, core component of the MITRAC (mitochondrial translation regulation assembly intermediate of cytochrome c oxidase complex) complex, that regulates cytochrome c oxidase assembly. MITRAC complexes regulate both translation of mitochondrial encoded components and assembly of nuclear-encoded components imported in mitochondrion. Required for efficient translation of MT-CO1 and mitochondrial respiratory chain complex IV assembly. The polypeptide is Cytochrome c oxidase assembly factor 3 homolog, mitochondrial (coa3a) (Danio rerio (Zebrafish)).